The primary structure comprises 232 residues: 2,3,4,5-tetrahydropyridine-2,6-dicarboxylate N-acetyltransferase (232 aa).

Belongs to the transferase hexapeptide repeat family. DapH subfamily.

It catalyses the reaction (S)-2,3,4,5-tetrahydrodipicolinate + acetyl-CoA + H2O = L-2-acetamido-6-oxoheptanedioate + CoA. Its pathway is amino-acid biosynthesis; L-lysine biosynthesis via DAP pathway; LL-2,6-diaminopimelate from (S)-tetrahydrodipicolinate (acetylase route): step 1/3. Functionally, catalyzes the transfer of an acetyl group from acetyl-CoA to tetrahydrodipicolinate. The polypeptide is 2,3,4,5-tetrahydropyridine-2,6-dicarboxylate N-acetyltransferase (Streptococcus pneumoniae serotype 2 (strain D39 / NCTC 7466)).